Reading from the N-terminus, the 129-residue chain is Serum amyloid A protein (129 aa).

An N-terminal signal peptide occupies residues 1 to 18 (MKLFTGLVFCSLVLGVSS). A Pyrrolidone carboxylic acid modification is found at Gln-19. Residues 88–129 (FFRHGNSGHGAEDSKADQAANEWGRSGKDPNHFRPAGLPSKY) form a disordered region. Positions 112 to 129 (RSGKDPNHFRPAGLPSKY) are cleaved as a propeptide — often cleaved during amyloidogenesis.

It belongs to the SAA family. Expressed by the liver; secreted in plasma.

The protein localises to the secreted. Functionally, major acute phase reactant. Apolipoprotein of the HDL complex. The polypeptide is Serum amyloid A protein (SAA1) (Felis catus (Cat)).